Here is a 424-residue protein sequence, read N- to C-terminus: Histidine--tRNA ligase (424 aa).

The protein belongs to the class-II aminoacyl-tRNA synthetase family. Homodimer.

Its subcellular location is the cytoplasm. The enzyme catalyses tRNA(His) + L-histidine + ATP = L-histidyl-tRNA(His) + AMP + diphosphate + H(+). This is Histidine--tRNA ligase from Thioalkalivibrio sulfidiphilus (strain HL-EbGR7).